The chain runs to 255 residues: MILGIDIGNTTSEFGFIYNGKRINSYKLRSDHTKTVDDWLIDISAIFSIEGMKKESVKDCVISSVVPPLEDRIYSACKKFLGKKPLRIGKELKVPIKINYKNPEEVGIDRVVNAFAGVKRYGKPLILVDLGTAITFDVVNQKGEYEGGAIFPGIDSSIEALFSKTAKLPKVSIENVKKVVGKTTVESIQSGIFFGYISLIEGMIKRIIREKGFSPKVILTGGSGEIITKGLEIDHIFDMYLSLEGIYDIYSYHGN.

6-13 (DIGNTTSE) is a binding site for ATP. Residues Tyr-100 and 107–110 (GIDR) contribute to the substrate site. Asp-109 acts as the Proton acceptor in catalysis. Asp-129 contacts K(+). Thr-132 is a binding site for ATP. Thr-184 contributes to the substrate binding site.

The protein belongs to the type III pantothenate kinase family. As to quaternary structure, homodimer. It depends on NH4(+) as a cofactor. K(+) is required as a cofactor.

The protein localises to the cytoplasm. The enzyme catalyses (R)-pantothenate + ATP = (R)-4'-phosphopantothenate + ADP + H(+). Its pathway is cofactor biosynthesis; coenzyme A biosynthesis; CoA from (R)-pantothenate: step 1/5. In terms of biological role, catalyzes the phosphorylation of pantothenate (Pan), the first step in CoA biosynthesis. The protein is Type III pantothenate kinase of Persephonella marina (strain DSM 14350 / EX-H1).